An 889-amino-acid chain; its full sequence is DNA gyrase subunit A (889 aa).

The Topo IIA-type catalytic domain maps to 35-501 (LPDVRDGLKP…GFEDLEDEDL (467 aa)). The active-site O-(5'-phospho-DNA)-tyrosine intermediate is Y123. Residues 528–534 (QNRGGRG) carry the GyrA-box motif. Residues 810-889 (VKEDAEDETN…IQQSSDEDEE (80 aa)) form a disordered region. Residues 813–823 (DAEDETNEDEQ) show a composition bias toward acidic residues. A compositionally biased stretch (basic and acidic residues) spans 863 to 875 (DGRIEVRQDFMDR). Over residues 876-889 (VEEDIQQSSDEDEE) the composition is skewed to acidic residues.

The protein belongs to the type II topoisomerase GyrA/ParC subunit family. As to quaternary structure, heterotetramer, composed of two GyrA and two GyrB chains. In the heterotetramer, GyrA contains the active site tyrosine that forms a transient covalent intermediate with DNA, while GyrB binds cofactors and catalyzes ATP hydrolysis.

It is found in the cytoplasm. It catalyses the reaction ATP-dependent breakage, passage and rejoining of double-stranded DNA.. Functionally, a type II topoisomerase that negatively supercoils closed circular double-stranded (ds) DNA in an ATP-dependent manner to modulate DNA topology and maintain chromosomes in an underwound state. Negative supercoiling favors strand separation, and DNA replication, transcription, recombination and repair, all of which involve strand separation. Also able to catalyze the interconversion of other topological isomers of dsDNA rings, including catenanes and knotted rings. Type II topoisomerases break and join 2 DNA strands simultaneously in an ATP-dependent manner. This is DNA gyrase subunit A from Staphylococcus aureus (strain N315).